The sequence spans 180 residues: dCTP deaminase, dUMP-forming (180 aa).

Residues arginine 100 to arginine 105, aspartate 117, threonine 125 to glutamate 127, glutamine 146, tyrosine 160, and glutamine 167 each bind dCTP. The active-site Proton donor/acceptor is glutamate 127.

The protein belongs to the dCTP deaminase family. As to quaternary structure, homotrimer.

The enzyme catalyses dCTP + 2 H2O = dUMP + NH4(+) + diphosphate. The protein operates within pyrimidine metabolism; dUMP biosynthesis; dUMP from dCTP: step 1/1. Functionally, bifunctional enzyme that catalyzes both the deamination of dCTP to dUTP and the hydrolysis of dUTP to dUMP without releasing the toxic dUTP intermediate. The polypeptide is dCTP deaminase, dUMP-forming (Persephonella marina (strain DSM 14350 / EX-H1)).